A 274-amino-acid polypeptide reads, in one-letter code: Penicillin-insensitive murein endopeptidase (274 aa).

The N-terminal stretch at 1 to 19 is a signal peptide; the sequence is MNKTAIALLALLASSASLA. Cystine bridges form between C44/C265, C187/C235, and C216/C223. Zn(2+)-binding residues include H110, H113, D120, D147, H150, and H211. Positions 227-274 are disordered; the sequence is PLPPPGDGCGAELQSWFEPPKPGTTKPEKKTPPPLPPSCQALLDEHVI.

This sequence belongs to the peptidase M74 family. Dimer. Zn(2+) serves as cofactor.

Its subcellular location is the periplasm. In terms of biological role, murein endopeptidase that cleaves the D-alanyl-meso-2,6-diamino-pimelyl amide bond that connects peptidoglycan strands. Likely plays a role in the removal of murein from the sacculus. The chain is Penicillin-insensitive murein endopeptidase from Escherichia coli (strain SE11).